A 199-amino-acid chain; its full sequence is Ribonuclease HII (199 aa).

Residues 12-199 enclose the RNase H type-2 domain; that stretch reads DLLAGTDEAG…FGPVKKILEG (188 aa). The a divalent metal cation site is built by Asp-18, Glu-19, and Asp-110.

Belongs to the RNase HII family. Mn(2+) is required as a cofactor. The cofactor is Mg(2+).

The protein resides in the cytoplasm. The catalysed reaction is Endonucleolytic cleavage to 5'-phosphomonoester.. Its function is as follows. Endonuclease that specifically degrades the RNA of RNA-DNA hybrids. This is Ribonuclease HII from Marinomonas sp. (strain MWYL1).